Here is a 158-residue protein sequence, read N- to C-terminus: Transcription elongation factor GreA (158 aa).

Belongs to the GreA/GreB family.

Functionally, necessary for efficient RNA polymerase transcription elongation past template-encoded arresting sites. The arresting sites in DNA have the property of trapping a certain fraction of elongating RNA polymerases that pass through, resulting in locked ternary complexes. Cleavage of the nascent transcript by cleavage factors such as GreA or GreB allows the resumption of elongation from the new 3'terminus. GreA releases sequences of 2 to 3 nucleotides. The polypeptide is Transcription elongation factor GreA (Rhizobium etli (strain ATCC 51251 / DSM 11541 / JCM 21823 / NBRC 15573 / CFN 42)).